The primary structure comprises 489 residues: Glycogen synthase (489 aa).

Residue Arg20 participates in ADP-alpha-D-glucose binding.

The protein belongs to the glycosyltransferase 1 family. Bacterial/plant glycogen synthase subfamily.

The catalysed reaction is [(1-&gt;4)-alpha-D-glucosyl](n) + ADP-alpha-D-glucose = [(1-&gt;4)-alpha-D-glucosyl](n+1) + ADP + H(+). The protein operates within glycan biosynthesis; glycogen biosynthesis. Its function is as follows. Synthesizes alpha-1,4-glucan chains using ADP-glucose. The polypeptide is Glycogen synthase (Chlorobium limicola (strain DSM 245 / NBRC 103803 / 6330)).